Reading from the N-terminus, the 475-residue chain is Trifunctional enzyme subunit beta, mitochondrial (475 aa).

Residues 1–34 (MTTILTCPFKKLPTTSKWALRFAIRPLSCSSQLR) constitute a mitochondrion transit peptide. Lysine 73 carries the post-translational modification N6-acetyllysine; alternate. Lysine 73 is modified (N6-succinyllysine; alternate). Cysteine 139 serves as the catalytic Acyl-thioester intermediate. An intramembrane segment occupies 174–221 (IRHSRKMRKLMLDLNKAKSMGQRLSLISKFRLNFLAPELPAVAEFSTS). Lysine 189 is modified (N6-acetyllysine; alternate). Lysine 189 bears the N6-succinyllysine; alternate mark. N6-succinyllysine occurs at positions 191, 273, and 292. Lysine 294 bears the N6-acetyllysine; alternate mark. Lysine 294 carries the post-translational modification N6-succinyllysine; alternate. Lysine 299 is subject to N6-acetyllysine. An N6-acetyllysine; alternate modification is found at lysine 333. Lysine 333 is subject to N6-succinyllysine; alternate. 2 positions are modified to N6-acetyllysine: lysine 349 and lysine 362. Cysteine 459 serves as the catalytic Proton donor/acceptor.

Belongs to the thiolase-like superfamily. Thiolase family. As to quaternary structure, heterotetramer of 2 alpha/HADHA and 2 beta/HADHB subunits; forms the mitochondrial trifunctional enzyme. Also purified as higher order heterooligomers including a 4 alpha/HADHA and 4 beta/HADHB heterooligomer which physiological significance remains unclear. The mitochondrial trifunctional enzyme interacts with MTLN. Interacts with RSAD2/viperin.

The protein localises to the mitochondrion. It localises to the mitochondrion inner membrane. Its subcellular location is the mitochondrion outer membrane. It is found in the endoplasmic reticulum. The catalysed reaction is an acyl-CoA + acetyl-CoA = a 3-oxoacyl-CoA + CoA. The enzyme catalyses butanoyl-CoA + acetyl-CoA = 3-oxohexanoyl-CoA + CoA. It carries out the reaction hexanoyl-CoA + acetyl-CoA = 3-oxooctanoyl-CoA + CoA. It catalyses the reaction octanoyl-CoA + acetyl-CoA = 3-oxodecanoyl-CoA + CoA. The catalysed reaction is decanoyl-CoA + acetyl-CoA = 3-oxododecanoyl-CoA + CoA. The enzyme catalyses dodecanoyl-CoA + acetyl-CoA = 3-oxotetradecanoyl-CoA + CoA. It carries out the reaction tetradecanoyl-CoA + acetyl-CoA = 3-oxohexadecanoyl-CoA + CoA. It functions in the pathway lipid metabolism; fatty acid beta-oxidation. Mitochondrial trifunctional enzyme catalyzes the last three of the four reactions of the mitochondrial beta-oxidation pathway. The mitochondrial beta-oxidation pathway is the major energy-producing process in tissues and is performed through four consecutive reactions breaking down fatty acids into acetyl-CoA. Among the enzymes involved in this pathway, the trifunctional enzyme exhibits specificity for long-chain fatty acids. Mitochondrial trifunctional enzyme is a heterotetrameric complex composed of two proteins, the trifunctional enzyme subunit alpha/HADHA carries the 2,3-enoyl-CoA hydratase and the 3-hydroxyacyl-CoA dehydrogenase activities, while the trifunctional enzyme subunit beta/HADHB described here bears the 3-ketoacyl-CoA thiolase activity. The sequence is that of Trifunctional enzyme subunit beta, mitochondrial (HADHB) from Macaca fascicularis (Crab-eating macaque).